A 944-amino-acid polypeptide reads, in one-letter code: MFLTCMETVTKELVSWMRGHESSVFSISVHASGKYAITTSSDTAQLWDLDTFQRKRRLNIRQSVGIQKVFFLPLSNTILSCFKDNSIFAWECDTLFCKYQLPAPPESSSILYKVFAVTRDGRILAAGGKSNHLHLWCLEARQLFRIIQMPTKVRAIRHLEFLPDSFDAGSNQVLGVLSQDGIMRFINIQTCKLLFEIGSLDEGISSSAISPHGRYIASIMEDGSLNIYSVQALTQEVNKPPPPLVKVIEDLPKNKLSSSDLKRKVTSGRVQQPAKSRESKIQTRILKQDLTGDFESKKNELPDGLNKERLQILLKGYGEYPTKYSTLIDKGTHVAFLNLQKKYPIKSRKLLRVLQRTLSALAHWSVIFSDTPYLPLLAFPFVKLFQNNQLICFEVIATLIINWCQHWFEYFPNPPINILSMIENVLAFHDTELLQHFIDHDITSQLYAWPLLETVFSEVLTREEWLKLFDNIFSNHPSFLLMTVVAYNMCSRVPLLNCNLKDDFEFFFHHRNNLDINVVIRQVYHLMETTPTDIHPDSMLNVFVALTKGQHPVFNQYPKFIVDYQTQERERIGNDELDYLRERQTVEDMQAKVDQQRVEDEAWYQKQELLRKAEETRREMLLQEEEKMIQQRQRLAAVKRELKVKEMHLQDAARRRFLKLQQDQQEMELRRLDDEIGRKVYMRDREIAATARELEMRQLELESQKRLYEKNLTENQEAVAKEMRADADAYRQKVDLEEHMFHKLIEAGETQSQKTQKVIKENLAKAEQACLNTDWQIQSLHKQKCDDLQRNKCYQEVAKLLRENRRKEIEIINAMVEEEAKKWKEAEGKEFCLRSAKKASALSDASRKWFLKQEINAAVEHAENPCHKEEPRFQNEQEDSSCLPRTSQLNDSSEMDPSTQISLNRRAVEWDTTGQYLIKKVRNLRQRLAAQARHRCQTAHLLAA.

WD repeat units lie at residues 12–52, 53–95, 96–143, 144–191, and 192–229; these read ELVS…LDTF, QRKR…CDTL, FCKY…ARQL, FRII…IQTC, and KLLF…NIYS. Residues 262–281 are disordered; the sequence is KRKVTSGRVQQPAKSRESKI. Residues 300-476 form the Rab-GAP TBC domain; the sequence is ELPDGLNKER…KLFDNIFSNH (177 aa). Coiled coils occupy residues 605 to 735 and 791 to 825; these read QKQE…QKVD and NKCY…KWKE. The span at 865-875 shows a compositional bias: basic and acidic residues; that stretch reads PCHKEEPRFQN. The interval 865–900 is disordered; sequence PCHKEEPRFQNEQEDSSCLPRTSQLNDSSEMDPSTQ. A compositionally biased stretch (polar residues) spans 883 to 900; it reads LPRTSQLNDSSEMDPSTQ. A mediates direct interaction with PJA2 region spans residues 931 to 934; sequence QARH.

Interacts with PJA2; the interaction is direct and recruits PJA2 to centrosomes. Interacts with OFD1; regulates its activity in cilium assembly. Interacts with PRKACA.

The protein localises to the cytoplasm. It localises to the cytoskeleton. The protein resides in the microtubule organizing center. It is found in the centrosome. Its subcellular location is the centriolar satellite. The protein localises to the cilium basal body. Functionally, molecular adapter which is involved in cilium biogenesis. Part of a functional complex including OFD1 a centriolar protein involved in cilium assembly. Could regulate the cAMP-dependent phosphorylation of OFD1, and its subsequent ubiquitination by PJA2 which ultimately leads to its proteasomal degradation. This chain is TBC1 domain family member 31, found in Pongo abelii (Sumatran orangutan).